Reading from the N-terminus, the 270-residue chain is Carboxy-terminal domain RNA polymerase II polypeptide A small phosphatase 2 (270 aa).

A Phosphoserine modification is found at Ser-5. The FCP1 homology domain occupies 96–254 (QDQGRICVVI…LNLIPVFEEL (159 aa)). The 4-aspartylphosphate intermediate role is filled by Asp-106. Mg(2+) is bound by residues Asp-106, Asp-108, and Asn-217. Residue Asp-108 is the Proton donor of the active site.

As to quaternary structure, monomer. Interacts with REST. Mg(2+) serves as cofactor. In terms of tissue distribution, expression is restricted to non-neuronal tissues.

The protein localises to the nucleus. The enzyme catalyses O-phospho-L-seryl-[protein] + H2O = L-seryl-[protein] + phosphate. The catalysed reaction is O-phospho-L-threonyl-[protein] + H2O = L-threonyl-[protein] + phosphate. Functionally, preferentially catalyzes the dephosphorylation of 'Ser-5' within the tandem 7 residue repeats in the C-terminal domain (CTD) of the largest RNA polymerase II subunit POLR2A. Negatively regulates RNA polymerase II transcription, possibly by controlling the transition from initiation/capping to processive transcript elongation. Recruited by REST to neuronal genes that contain RE-1 elements, leading to neuronal gene silencing in non-neuronal cells. This chain is Carboxy-terminal domain RNA polymerase II polypeptide A small phosphatase 2 (Ctdsp2), found in Mus musculus (Mouse).